Reading from the N-terminus, the 214-residue chain is Urease accessory protein UreE (214 aa).

Residues 163–214 (NAEPSGVDHSHEATDSGHGYGEDHDHDHSHDHNHDHDHNHDHDHSHSHDSHE) are disordered. Residues 168–214 (GVDHSHEATDSGHGYGEDHDHDHSHDHNHDHDHNHDHDHSHSHDSHE) are compositionally biased toward basic and acidic residues.

This sequence belongs to the UreE family.

It is found in the cytoplasm. In terms of biological role, involved in urease metallocenter assembly. Binds nickel. Probably functions as a nickel donor during metallocenter assembly. This is Urease accessory protein UreE from Natronomonas pharaonis (strain ATCC 35678 / DSM 2160 / CIP 103997 / JCM 8858 / NBRC 14720 / NCIMB 2260 / Gabara) (Halobacterium pharaonis).